Here is a 177-residue protein sequence, read N- to C-terminus: Probable chemoreceptor glutamine deamidase CheD (177 aa).

It belongs to the CheD family.

The enzyme catalyses L-glutaminyl-[protein] + H2O = L-glutamyl-[protein] + NH4(+). Its function is as follows. Probably deamidates glutamine residues to glutamate on methyl-accepting chemotaxis receptors (MCPs), playing an important role in chemotaxis. The protein is Probable chemoreceptor glutamine deamidase CheD of Pseudomonas syringae pv. syringae (strain B728a).